Consider the following 1015-residue polypeptide: Frequency clock protein (1015 aa).

Disordered regions lie at residues 1-138 (MQPT…SADD), 183-285 (KRKK…QKVD), 352-383 (DFSP…TFSS), 402-465 (HVAG…DPDR), 544-614 (GRKI…VSAS), 629-668 (SPNE…NRRK), 706-728 (ERPD…GSSI), and 895-1015 (SEDD…SSQG). Over residues 49–68 (SAPPNDSNENSSSPRRASSG) the composition is skewed to low complexity. A compositionally biased stretch (basic and acidic residues) spans 69–80 (ESHETGQSDAKK). Polar residues predominate over residues 82–95 (FNQSNQNPTATFDS). Residues 107-117 (KESDSSNEDKP) are compositionally biased toward basic and acidic residues. Composition is skewed to low complexity over residues 203-216 (SPNT…STTK), 228-267 (SGSG…SGTS), and 356-368 (QQQQ…QQQQ). A compositionally biased stretch (polar residues) spans 369 to 383 (PKSNFITNPGATFSS). Positions 431–442 (NSSSNGNDSGTN) are enriched in low complexity. Positions 443–453 (PSPPMPPPPEQ) are enriched in pro residues. Residues 454 to 465 (RPTRPRDLDPDR) are compositionally biased toward basic and acidic residues. Polar residues predominate over residues 556–570 (TKFSSESSGDLSQRS). The short motif at 584-588 (HKRQK) is the Nuclear localization signal element. Over residues 590–600 (GHSTGDSGSSG) the composition is skewed to low complexity. The segment covering 629–643 (SPNEQSSMEDGTLSS) has biased composition (polar residues). 2 stretches are compositionally biased toward acidic residues: residues 895-909 (SEDD…EFNS) and 934-946 (SGDE…EDDI). The segment covering 976–1003 (GSSRGRSNSASAEAVLRAGGSSAATAGG) has biased composition (low complexity).

It belongs to the FRQ family.

The protein resides in the nucleus. In terms of biological role, circadian clock component involved in the generation of biological rhythms, in particular in rhythm stability, period length, and temperature compensation. Behaves as a negative element in circadian transcriptional loop. The sequence is that of Frequency clock protein (FRQ) from Trichoderma spinulosum (Hypocrea spinulosa).